The primary structure comprises 1092 residues: Isoleucine--tRNA ligase (1092 aa).

The short motif at 53–63 is the 'HIGH' region element; the sequence is PFANGLPHYGH. The 'KMSKS' region signature appears at 613–617; sequence KLSKR. Residue Lys-616 coordinates ATP.

This sequence belongs to the class-I aminoacyl-tRNA synthetase family. IleS type 2 subfamily. As to quaternary structure, monomer. The cofactor is Zn(2+).

Its subcellular location is the cytoplasm. It catalyses the reaction tRNA(Ile) + L-isoleucine + ATP = L-isoleucyl-tRNA(Ile) + AMP + diphosphate. Catalyzes the attachment of isoleucine to tRNA(Ile). As IleRS can inadvertently accommodate and process structurally similar amino acids such as valine, to avoid such errors it has two additional distinct tRNA(Ile)-dependent editing activities. One activity is designated as 'pretransfer' editing and involves the hydrolysis of activated Val-AMP. The other activity is designated 'posttransfer' editing and involves deacylation of mischarged Val-tRNA(Ile). The sequence is that of Isoleucine--tRNA ligase from Rickettsia africae (strain ESF-5).